The following is an 86-amino-acid chain: Small ribosomal subunit protein bS20 (86 aa).

It belongs to the bacterial ribosomal protein bS20 family.

In terms of biological role, binds directly to 16S ribosomal RNA. The sequence is that of Small ribosomal subunit protein bS20 from Rhodococcus jostii (strain RHA1).